A 65-amino-acid chain; its full sequence is Metallothionein-like protein type 3 (65 aa).

It belongs to the metallothionein superfamily. Type 15 family.

Metallothioneins have a high content of cysteine residues that bind various heavy metals. This is Metallothionein-like protein type 3 from Musa acuminata (Banana).